We begin with the raw amino-acid sequence, 186 residues long: Peptide deformylase (186 aa).

Residues cysteine 113 and histidine 156 each contribute to the Fe cation site. The active site involves glutamate 157. Histidine 160 serves as a coordination point for Fe cation.

This sequence belongs to the polypeptide deformylase family. Requires Fe(2+) as cofactor.

The catalysed reaction is N-terminal N-formyl-L-methionyl-[peptide] + H2O = N-terminal L-methionyl-[peptide] + formate. Removes the formyl group from the N-terminal Met of newly synthesized proteins. Requires at least a dipeptide for an efficient rate of reaction. N-terminal L-methionine is a prerequisite for activity but the enzyme has broad specificity at other positions. This Levilactobacillus brevis (strain ATCC 367 / BCRC 12310 / CIP 105137 / JCM 1170 / LMG 11437 / NCIMB 947 / NCTC 947) (Lactobacillus brevis) protein is Peptide deformylase.